Here is a 137-residue protein sequence, read N- to C-terminus: Bombinin-like peptides 1 (137 aa).

A signal peptide spans Met-1–Ala-18. An Asparagine amide modification is found at Asn-70. A disordered region spans residues Leu-91 to Glu-112. Position 118 is a D-allo-isoleucine (Ile-118). Ile-136 bears the Isoleucine amide mark.

It belongs to the bombinin family. In terms of tissue distribution, expressed by the skin glands.

The protein localises to the secreted. Functionally, has antimicrobial activity, but no hemolytic activity. Preliminary evidence indicates that this peptide does not lyse and thus kill the bacteria by its antimicrobial activity. Its function is as follows. Bombinin H has antibacterial and hemolytic activity. The sequence is that of Bombinin-like peptides 1 from Bombina variegata (Yellow-bellied toad).